We begin with the raw amino-acid sequence, 266 residues long: Phosphatidate cytidylyltransferase (266 aa).

8 helical membrane-spanning segments follow: residues 16-36 (VVLI…LFWA), 52-72 (LFQV…WVAA), 78-98 (PVEC…YQKA), 101-121 (SEAI…FGVY), 125-145 (GAVA…GAFF), 164-184 (LEGA…VGMG), 186-206 (LSGG…MAVF), and 237-257 (LDSM…LEIW).

The protein belongs to the CDS family.

It is found in the cell inner membrane. The enzyme catalyses a 1,2-diacyl-sn-glycero-3-phosphate + CTP + H(+) = a CDP-1,2-diacyl-sn-glycerol + diphosphate. It participates in phospholipid metabolism; CDP-diacylglycerol biosynthesis; CDP-diacylglycerol from sn-glycerol 3-phosphate: step 3/3. This chain is Phosphatidate cytidylyltransferase (cdsA), found in Helicobacter pylori (strain J99 / ATCC 700824) (Campylobacter pylori J99).